The chain runs to 707 residues: Early transcription factor 82 kDa subunit (707 aa).

It belongs to the poxviridae VETF large subunit family. As to quaternary structure, heterodimer of a 70 kDa and a 82 kDa subunit. Part of the early transcription complex composed of ETF, RAP94, and the DNA-directed RNA polymerase.

It localises to the virion. Its function is as follows. Acts with RNA polymerase to initiate transcription from early gene promoters. Is recruited by the RPO-associated protein of 94 kDa (RAP94) to form the early transcription complex, which also contains the core RNA polymerase. ETF heterodimer binds to early gene promoters. The protein is Early transcription factor 82 kDa subunit (VETFL) of Molluscum contagiosum virus subtype 1 (MOCV).